We begin with the raw amino-acid sequence, 299 residues long: tRNA dimethylallyltransferase (299 aa).

13 to 20 (GPTASGKT) provides a ligand contact to ATP. Position 15-20 (15-20 (TASGKT)) interacts with substrate. Residues 38–41 (DSRQ) form an interaction with substrate tRNA region.

The protein belongs to the IPP transferase family. Monomer. The cofactor is Mg(2+).

The catalysed reaction is adenosine(37) in tRNA + dimethylallyl diphosphate = N(6)-dimethylallyladenosine(37) in tRNA + diphosphate. In terms of biological role, catalyzes the transfer of a dimethylallyl group onto the adenine at position 37 in tRNAs that read codons beginning with uridine, leading to the formation of N6-(dimethylallyl)adenosine (i(6)A). This chain is tRNA dimethylallyltransferase, found in Prochlorococcus marinus (strain MIT 9211).